Here is a 291-residue protein sequence, read N- to C-terminus: ATP synthase gamma chain (291 aa).

The protein belongs to the ATPase gamma chain family. F-type ATPases have 2 components, CF(1) - the catalytic core - and CF(0) - the membrane proton channel. CF(1) has five subunits: alpha(3), beta(3), gamma(1), delta(1), epsilon(1). CF(0) has three main subunits: a, b and c.

Its subcellular location is the cell inner membrane. Produces ATP from ADP in the presence of a proton gradient across the membrane. The gamma chain is believed to be important in regulating ATPase activity and the flow of protons through the CF(0) complex. The sequence is that of ATP synthase gamma chain from Ruegeria sp. (strain TM1040) (Silicibacter sp.).